The chain runs to 269 residues: GATA zinc finger domain-containing protein 1 (269 aa).

The GATA-type zinc finger occupies 9–33 (CSVCKTTSSSMWKKGAQGEILCHHC). Positions 63-115 (ATFASTSATPPQSNGGGGGKQSKQEIHRRSARLRNTKYKSAPAAEKKVSTKGK) are disordered. Lys-262 participates in a covalent cross-link: Glycyl lysine isopeptide (Lys-Gly) (interchain with G-Cter in SUMO2).

In terms of assembly, component of a chromatin complex, at least composed of KDM5A, GATAD1 and EMSY. As to expression, ubiquitously expressed among various tissue types. Expressed in left ventricular myocytes.

It localises to the nucleus. Functionally, component of some chromatin complex recruited to chromatin sites methylated 'Lys-4' of histone H3 (H3K4me), with a preference for trimethylated form (H3K4me3). The protein is GATA zinc finger domain-containing protein 1 (GATAD1) of Homo sapiens (Human).